Consider the following 151-residue polypeptide: Large ribosomal subunit protein uL13 (151 aa).

This sequence belongs to the universal ribosomal protein uL13 family. Part of the 50S ribosomal subunit.

In terms of biological role, this protein is one of the early assembly proteins of the 50S ribosomal subunit, although it is not seen to bind rRNA by itself. It is important during the early stages of 50S assembly. This Petrotoga mobilis (strain DSM 10674 / SJ95) protein is Large ribosomal subunit protein uL13.